We begin with the raw amino-acid sequence, 386 residues long: Alanine racemase (386 aa).

The active-site Proton acceptor; specific for D-alanine is the K48. Residue K48 is modified to N6-(pyridoxal phosphate)lysine. R149 is a binding site for substrate. Y278 functions as the Proton acceptor; specific for L-alanine in the catalytic mechanism. M326 is a binding site for substrate.

It belongs to the alanine racemase family. Pyridoxal 5'-phosphate is required as a cofactor.

It catalyses the reaction L-alanine = D-alanine. Its pathway is amino-acid biosynthesis; D-alanine biosynthesis; D-alanine from L-alanine: step 1/1. Its function is as follows. Catalyzes the interconversion of L-alanine and D-alanine. May also act on other amino acids. The protein is Alanine racemase (alr) of Nostoc sp. (strain PCC 7120 / SAG 25.82 / UTEX 2576).